Consider the following 366-residue polypeptide: NADH-quinone oxidoreductase subunit D (366 aa).

This sequence belongs to the complex I 49 kDa subunit family. NDH-1 is composed of 14 different subunits. Subunits NuoB, C, D, E, F, and G constitute the peripheral sector of the complex.

Its subcellular location is the cell membrane. The catalysed reaction is a quinone + NADH + 5 H(+)(in) = a quinol + NAD(+) + 4 H(+)(out). Functionally, NDH-1 shuttles electrons from NADH, via FMN and iron-sulfur (Fe-S) centers, to quinones in the respiratory chain. The immediate electron acceptor for the enzyme in this species is believed to be a menaquinone. Couples the redox reaction to proton translocation (for every two electrons transferred, four hydrogen ions are translocated across the cytoplasmic membrane), and thus conserves the redox energy in a proton gradient. The sequence is that of NADH-quinone oxidoreductase subunit D from Geobacillus thermodenitrificans (strain NG80-2).